Here is a 398-residue protein sequence, read N- to C-terminus: Chalcone synthase 1 (398 aa).

58-65 (KFKRMCDK) contacts CoA. Cysteine 167 functions as the Acyl-thioester intermediate in the catalytic mechanism. Substrate-binding positions include threonine 200 and 219-220 (GD). Alanine 311 is a CoA binding site.

This sequence belongs to the thiolase-like superfamily. Chalcone/stilbene synthases family. In terms of assembly, homodimer.

It catalyses the reaction (E)-4-coumaroyl-CoA + 3 malonyl-CoA + 3 H(+) = 2',4,4',6'-tetrahydroxychalcone + 3 CO2 + 4 CoA. Its pathway is secondary metabolite biosynthesis; flavonoid biosynthesis. Functionally, the primary product of this enzyme is 4,2',4',6'-tetrahydroxychalcone (also termed naringenin-chalcone or chalcone) which can under specific conditions spontaneously isomerize into naringenin. The chain is Chalcone synthase 1 (CHS1) from Oryza sativa subsp. indica (Rice).